The primary structure comprises 127 residues: Protein translocase subunit SecE (127 aa).

3 consecutive transmembrane segments (helical) span residues 16–36, 42–62, and 98–118; these read IAKWSFLGILIILFILSNHYY, IFQNILLTSLTILSTGLIFLT, and IIVTILLALILWGLDNILIWF.

The protein belongs to the SecE/SEC61-gamma family. In terms of assembly, component of the Sec protein translocase complex. Heterotrimer consisting of SecY, SecE and SecG subunits. The heterotrimers can form oligomers, although 1 heterotrimer is thought to be able to translocate proteins. Interacts with the ribosome. Interacts with SecDF, and other proteins may be involved. Interacts with SecA.

It is found in the cell membrane. Its function is as follows. Essential subunit of the Sec protein translocation channel SecYEG. Clamps together the 2 halves of SecY. May contact the channel plug during translocation. This is Protein translocase subunit SecE from Buchnera aphidicola subsp. Baizongia pistaciae (strain Bp).